The primary structure comprises 320 residues: Methionyl-tRNA formyltransferase (320 aa).

A (6S)-5,6,7,8-tetrahydrofolate-binding site is contributed by 114–117 (SLLP).

Belongs to the Fmt family.

It carries out the reaction L-methionyl-tRNA(fMet) + (6R)-10-formyltetrahydrofolate = N-formyl-L-methionyl-tRNA(fMet) + (6S)-5,6,7,8-tetrahydrofolate + H(+). Functionally, attaches a formyl group to the free amino group of methionyl-tRNA(fMet). The formyl group appears to play a dual role in the initiator identity of N-formylmethionyl-tRNA by promoting its recognition by IF2 and preventing the misappropriation of this tRNA by the elongation apparatus. This Acinetobacter baumannii (strain AB0057) protein is Methionyl-tRNA formyltransferase.